The chain runs to 177 residues: RNA polymerase sigma-E factor (177 aa).

A Polymerase core binding motif is present at residues 34–47 (DLLQTALARTYGRW). The segment at residues 128 to 147 (TEETAAALGMSAGTVKSTLH) is a DNA-binding region (H-T-H motif).

It belongs to the sigma-70 factor family. ECF subfamily.

The protein resides in the cytoplasm. In terms of biological role, sigma factors are initiation factors that promote the attachment of RNA polymerase to specific initiation sites and are then released. This sigma factor is required for normal cell wall integrity; it is recruited by RNA polymerase to transcribe genes with cell wall-related functions. It is also involved in the transcription of the dagA gene coding for an extracellular agar-degrading enzyme. In Streptomyces coelicolor (strain ATCC BAA-471 / A3(2) / M145), this protein is RNA polymerase sigma-E factor (sigE).